The sequence spans 399 residues: MEEEHINQRPSATVEEYSYSEADFVFSGLSWKERRQYAEDTSFLSPFDKALQSKWEQKMNEGLFRYPLRNLQTKILPGSLSYVAQLNIQRSINRRKPEDIWSIQQKFNPNQFNYNKIKPEEIVFQMIRSETEHCVDSDKVHGSSVNGMGTSDCKSGSTHQRCCILECKGGCTLVVINVSPLEFGHVLFMPDPSLCLPQILTEDLMLFGLESVLLSAHPGFRVGFNSLGGFASVNHLHLHGFYLDHDLFIESSSSKPLCPEMNFHLITHFPAPSFLFYTDGRNLKSTAQNICKVTDFLVAKNIAHNLFITRGSNPDTGNGSEGRNGIRVNIWARKPSFGAKEVSAFNVALCELAGHLPVKNQEDFNSITEDSVIDIIHNCLLADDEFTQLSLDLVEYLRK.

Catalysis depends on histidine 237, which acts as the Tele-GMP-histidine intermediate.

The protein belongs to the GDPGP1 family.

It localises to the cytoplasm. It catalyses the reaction GDP-alpha-D-glucose + phosphate = alpha-D-glucose 1-phosphate + GDP + H(+). In terms of biological role, specific and highly efficient GDP-D-glucose phosphorylase regulating the levels of GDP-D-glucose in cells. The polypeptide is GDP-D-glucose phosphorylase 1 (gdpgp1) (Xenopus laevis (African clawed frog)).